The primary structure comprises 101 residues: Small ribosomal subunit protein bS6 (101 aa).

This sequence belongs to the bacterial ribosomal protein bS6 family.

Functionally, binds together with bS18 to 16S ribosomal RNA. This Micrococcus luteus (strain ATCC 4698 / DSM 20030 / JCM 1464 / CCM 169 / CCUG 5858 / IAM 1056 / NBRC 3333 / NCIMB 9278 / NCTC 2665 / VKM Ac-2230) (Micrococcus lysodeikticus) protein is Small ribosomal subunit protein bS6.